We begin with the raw amino-acid sequence, 193 residues long: ATP-dependent Clp protease proteolytic subunit (193 aa).

The Nucleophile role is filled by S98. The active site involves H123.

This sequence belongs to the peptidase S14 family. In terms of assembly, fourteen ClpP subunits assemble into 2 heptameric rings which stack back to back to give a disk-like structure with a central cavity, resembling the structure of eukaryotic proteasomes.

Its subcellular location is the cytoplasm. The enzyme catalyses Hydrolysis of proteins to small peptides in the presence of ATP and magnesium. alpha-casein is the usual test substrate. In the absence of ATP, only oligopeptides shorter than five residues are hydrolyzed (such as succinyl-Leu-Tyr-|-NHMec, and Leu-Tyr-Leu-|-Tyr-Trp, in which cleavage of the -Tyr-|-Leu- and -Tyr-|-Trp bonds also occurs).. In terms of biological role, cleaves peptides in various proteins in a process that requires ATP hydrolysis. Has a chymotrypsin-like activity. Plays a major role in the degradation of misfolded proteins. This is ATP-dependent Clp protease proteolytic subunit from Glaesserella parasuis serovar 5 (strain SH0165) (Haemophilus parasuis).